A 165-amino-acid polypeptide reads, in one-letter code: MLAVIRIRGRTGIKQDIEDTAHLLRLNRINHLVLLQEDAVTKGMLQKVKDYVTWGEIDVDTLEVLLKNRCLFKGRRKLTEEELKDVTGFGSYRDLAKALVDGKIKFSEINDVVPVIRLNPPYKGYEAIKTSYRNGGSAGYRGKDINNLIRRMIIPGVDLNGQREN.

Belongs to the universal ribosomal protein uL30 family. As to quaternary structure, part of the 50S ribosomal subunit.

The protein is Large ribosomal subunit protein uL30 of Thermoplasma volcanium (strain ATCC 51530 / DSM 4299 / JCM 9571 / NBRC 15438 / GSS1).